A 263-amino-acid polypeptide reads, in one-letter code: Transmembrane protein 176B (263 aa).

A run of 4 helical transmembrane segments spans residues 61-81 (LGVT…CLYF), 89-109 (ASGC…GIVI), 125-145 (LLLA…KSLI), and 197-217 (LFLA…VVSV). Residues 242-263 (KKLLGGDSAPASPTKEKIPVTP) are disordered. Phosphoserine is present on residues Ser-249 and Ser-253.

This sequence belongs to the TMEM176 family. As to expression, expressed in spleen by a variety of myeloid cells including macrophages and dendritic cells (at protein level). Ubiquitously expressed with higher expression in lymphoid tissues.

Its subcellular location is the nucleus membrane. Required for the development of cerebellar granule cells. May play a role in the process of maturation of dendritic cells. The chain is Transmembrane protein 176B (Tmem176b) from Rattus norvegicus (Rat).